The sequence spans 113 residues: UPF0482 protein YnfB (113 aa).

The signal sequence occupies residues methionine 1 to alanine 28.

This sequence belongs to the UPF0482 family.

This is UPF0482 protein YnfB from Salmonella arizonae (strain ATCC BAA-731 / CDC346-86 / RSK2980).